A 438-amino-acid chain; its full sequence is Exosome complex component RRP45B (438 aa).

2 disordered regions span residues 293 to 322 (PTLA…RAAE) and 334 to 438 (STEE…KNKS). Basic and acidic residues-rich tracts occupy residues 307–322 (VKEE…RAAE) and 334–347 (STEE…EEAA). Positions 380–394 (TKSSSTKKMNGSGNA) are enriched in polar residues. Residues 410-429 (LGKKDTKHKDGEMTLKDAVK) show a composition bias toward basic and acidic residues.

It belongs to the RNase PH family.

It is found in the cytoplasm. The protein resides in the nucleus. Functionally, probable 3'-&gt;5' exoribonuclease involved in the regulation of cuticular wax biosynthesis by controlling the expression of CER3. May act by degrading a specific mRNA species encoding a negative regulator of CER3 transcription. Can perform exosomal functions and complement the yeast rrp45 null mutant. The protein is Exosome complex component RRP45B of Arabidopsis thaliana (Mouse-ear cress).